The chain runs to 393 residues: S-adenosylmethionine synthase 1 (393 aa).

Residue Glu9 participates in Mg(2+) binding. An ATP-binding site is contributed by His15. Glu43 is a K(+) binding site. L-methionine-binding residues include Glu56 and Gln99. Residues 167–169 (DGK), 235–238 (SGRF), Asp246, 252–253 (RK), Ala269, Lys273, and Lys277 each bind ATP. Asp246 provides a ligand contact to L-methionine. L-methionine is bound at residue Lys277.

Belongs to the AdoMet synthase family. Homotetramer. The cofactor is Mn(2+). It depends on Mg(2+) as a cofactor. Requires Co(2+) as cofactor. K(+) serves as cofactor.

The protein resides in the cytoplasm. It catalyses the reaction L-methionine + ATP + H2O = S-adenosyl-L-methionine + phosphate + diphosphate. Its pathway is amino-acid biosynthesis; S-adenosyl-L-methionine biosynthesis; S-adenosyl-L-methionine from L-methionine: step 1/1. In terms of biological role, catalyzes the formation of S-adenosylmethionine from methionine and ATP. The reaction comprises two steps that are both catalyzed by the same enzyme: formation of S-adenosylmethionine (AdoMet) and triphosphate, and subsequent hydrolysis of the triphosphate. The protein is S-adenosylmethionine synthase 1 (METK1) of Picea sitchensis (Sitka spruce).